The chain runs to 379 residues: 1-deoxy-D-xylulose 5-phosphate reductoisomerase (379 aa).

Residues Thr10, Gly11, Ser12, Ile13, Arg38, Asn39, and Asn121 each contribute to the NADPH site. 1-deoxy-D-xylulose 5-phosphate is bound at residue Lys122. An NADPH-binding site is contributed by Glu123. Asp147 contacts Mn(2+). The 1-deoxy-D-xylulose 5-phosphate site is built by Ser148, Glu149, Ser173, and His196. Mn(2+) is bound at residue Glu149. NADPH is bound at residue Gly202. Residues Ser209, Asn214, Lys215, and Glu218 each coordinate 1-deoxy-D-xylulose 5-phosphate. Mn(2+) is bound at residue Glu218.

Belongs to the DXR family. The cofactor is Mg(2+). Requires Mn(2+) as cofactor.

It catalyses the reaction 2-C-methyl-D-erythritol 4-phosphate + NADP(+) = 1-deoxy-D-xylulose 5-phosphate + NADPH + H(+). It participates in isoprenoid biosynthesis; isopentenyl diphosphate biosynthesis via DXP pathway; isopentenyl diphosphate from 1-deoxy-D-xylulose 5-phosphate: step 1/6. Catalyzes the NADPH-dependent rearrangement and reduction of 1-deoxy-D-xylulose-5-phosphate (DXP) to 2-C-methyl-D-erythritol 4-phosphate (MEP). The polypeptide is 1-deoxy-D-xylulose 5-phosphate reductoisomerase (Chlamydia muridarum (strain MoPn / Nigg)).